Here is a 167-residue protein sequence, read N- to C-terminus: Ribosome maturation factor RimP (167 aa).

The protein belongs to the RimP family.

It is found in the cytoplasm. Its function is as follows. Required for maturation of 30S ribosomal subunits. The protein is Ribosome maturation factor RimP of Cytophaga hutchinsonii (strain ATCC 33406 / DSM 1761 / CIP 103989 / NBRC 15051 / NCIMB 9469 / D465).